A 314-amino-acid polypeptide reads, in one-letter code: Versiconal hemiacetal acetate esterase (314 aa).

The Involved in the stabilization of the negatively charged intermediate by the formation of the oxyanion hole signature appears at 85-87 (HGG). Catalysis depends on residues Ser-154, Asp-255, and His-285.

It belongs to the 'GDXG' lipolytic enzyme family.

It catalyses the reaction (2S,3S)-versiconal hemiacetal acetate + H2O = (2S-3S)-versiconal hemiacetal + acetate + H(+). It carries out the reaction (3S)-versiconol acetate + H2O = (S)-versiconol + acetate + H(+). It functions in the pathway mycotoxin biosynthesis; aflatoxin biosynthesis. Functionally, versiconal hemiacetal acetate esterase; part of the gene cluster that mediates the biosynthesis of aflatoxins, a group of polyketide-derived furanocoumarins, and part of the most toxic and carcinogenic compounds among the known mycotoxins. The four major aflatoxins produced by A.parasiticus are aflatoxin B1 (AFB1), aflatoxin B2 (AFB2), aflatoxin G1 (AFG1) and aflatoxin G2 (AFG2). Within the aflatoxin pathway, the versiconal hemiacetal acetate esterase aflJ converts versiconal hemiacetal acetate (VHA) into versiconal (VAL). The biosynthesis of aflatoxins begins with the norsolorinic acid synthase aflC that combines a hexanoyl starter unit produced by the fatty acid synthase aflA/aflB and 7 malonyl-CoA extender units to synthesize the precursor NOR. The second step is the conversion of NOR to averantin and requires the norsolorinic acid ketoreductase aflD, which catalyzes the dehydration of norsolorinic acid to form (1'S)-averantin. The norsolorinic acid reductases aflE and aflF may also play a role in the conversion of NOR to AVN. The cytochrome P450 monooxygenase aflG then catalyzes the hydroxylation of AVN to 5'hydroxyaverantin (HAVN). The next step is performed by the 5'-hydroxyaverantin dehydrogenase aflH that transforms HAVN to 5'-oxoaverantin (OAVN) which is further converted to averufin (AVF) by aflK that plays a dual role in the pathway, as a 5'-oxoaverantin cyclase that mediates conversion of 5'-oxoaverantin, as well as a versicolorin B synthase in a later step in the pathway. The averufin oxidase aflI catalyzes the conversion of AVF to versiconal hemiacetal acetate (VHA). VHA is then the substrate for the versiconal hemiacetal acetate esterase aflJ to yield versiconal (VAL). Versicolorin B synthase aflK then converts VAL to versicolorin B (VERB) by closing the bisfuran ring of aflatoxin which is required for DNA-binding, thus giving to aflatoxin its activity as a mutagen. Then, the activity of the versicolorin B desaturase aflL leads to versicolorin A (VERA). A branch point starts from VERB since it can also be converted to dihydrodemethylsterigmatocystin (DMDHST), probably also by aflL, VERA being a precursor for aflatoxins B1 and G1, and DMDHST for aflatoxins B2 and G2. Next, the versicolorin reductase aflM and the cytochrome P450 monooxygenase aflN are involved in conversion of VERA to demethylsterigmatocystin (DMST). AflX and aflY seem also involved in this step, through probable aflX-mediated epoxide ring-opening step following versicolorin A oxidation and aflY-mediated Baeyer-Villiger oxidation required for the formation of the xanthone ring. The methyltransferase aflO then leads to the modification of DMST to sterigmatocystin (ST), and of DMDHST to dihydrosterigmatocystin (DHST). Both ST and DHST are then substrates of the O-methyltransferase aflP to yield O-methylsterigmatocystin (OMST) and dihydro-O-methylsterigmatocystin (DHOMST), respectively. Finally OMST is converted to aflatoxins B1 and G1, and DHOMST to aflatoxins B2 and G2, via the action of several enzymes including O-methylsterigmatocystin oxidoreductase aflQ, the cytochrome P450 monooxygenase aflU, but also the NADH-dependent flavin oxidoreductase nadA which is specifically required for the synthesis of AFG1. In Aspergillus parasiticus (strain ATCC 56775 / NRRL 5862 / SRRC 143 / SU-1), this protein is Versiconal hemiacetal acetate esterase.